Reading from the N-terminus, the 575-residue chain is DNA-directed RNA polymerase subunit beta' (575 aa).

Zn(2+)-binding residues include C64, C66, C85, and C88. 3 residues coordinate Mg(2+): D440, D442, and D444.

It belongs to the RNA polymerase beta' chain family. RpoC1 subfamily. As to quaternary structure, in plastids the minimal PEP RNA polymerase catalytic core is composed of four subunits: alpha, beta, beta', and beta''. When a (nuclear-encoded) sigma factor is associated with the core the holoenzyme is formed, which can initiate transcription. Mg(2+) serves as cofactor. Zn(2+) is required as a cofactor.

It localises to the plastid. It catalyses the reaction RNA(n) + a ribonucleoside 5'-triphosphate = RNA(n+1) + diphosphate. Its function is as follows. DNA-dependent RNA polymerase catalyzes the transcription of DNA into RNA using the four ribonucleoside triphosphates as substrates. This chain is DNA-directed RNA polymerase subunit beta', found in Euglena longa (Euglenophycean alga).